A 220-amino-acid chain; its full sequence is Redox-sensing transcriptional repressor Rex (220 aa).

Positions 16–55 (MYVQVLETLKREGSQVVSSELLARTCSVNPSQIRKDLAYF) form a DNA-binding region, H-T-H motif. Residue 90–95 (GIGNLG) coordinates NAD(+).

This sequence belongs to the transcriptional regulatory Rex family. In terms of assembly, homodimer.

Its subcellular location is the cytoplasm. Its function is as follows. Modulates transcription in response to changes in cellular NADH/NAD(+) redox state. The sequence is that of Redox-sensing transcriptional repressor Rex from Solidesulfovibrio magneticus (strain ATCC 700980 / DSM 13731 / RS-1) (Desulfovibrio magneticus).